Here is a 595-residue protein sequence, read N- to C-terminus: Protein halfway (595 aa).

Disordered stretches follow at residues 1-42 and 64-98; these read MLLT…ADDE and TGAA…PLLP. Residues asparagine 250 and asparagine 255 are each glycosylated (N-linked (GlcNAc...) asparagine). Residues 347–402 enclose the LRRNT domain; sequence ESTKRCMTKCPVIPNYGSCKCRFESIMIIQDDQSKPKCHVDCSNLGLVELPPRLPD. 3 LRR repeats span residues 403-424, 429-450, and 454-475; these read NTFV…FQTN, NINR…EGTK, and NFQR…FLNN. The region spanning 489-538 is the LRRCT domain; it reads NKLQCDCNSAKTLQNWLKERSTDIPDYMEIRCRNIPQSVIELQEAKLCQS.

Has a role in the ecdysone induced cascade; probably indirect control of 'late' ecdysone genes. This is Protein halfway (hfw) from Drosophila pseudoobscura pseudoobscura (Fruit fly).